Here is a 1080-residue protein sequence, read N- to C-terminus: Carbamoyl phosphate synthase large chain (1080 aa).

The segment at 1 to 403 (MPKRTDLKTI…SLQKALRGLE (403 aa)) is carboxyphosphate synthetic domain. The ATP site is built by Arg-129, Arg-169, Gly-175, Gly-176, Glu-208, Val-210, Glu-215, Gly-241, Val-242, His-243, Gln-285, and Glu-299. Residues 133–328 (RVAMGEIGLD…IAKVAAKLAV (196 aa)) form the ATP-grasp 1 domain. Residues Gln-285, Glu-299, and Asn-301 each contribute to the Mg(2+) site. Residues Gln-285, Glu-299, and Asn-301 each coordinate Mn(2+). The tract at residues 404–554 (TGKIGLDPTG…YSTYEDECEA (151 aa)) is oligomerization domain. The tract at residues 555 to 942 (LPSNRDKIMI…AFARAQEAGG (388 aa)) is carbamoyl phosphate synthetic domain. Positions 679–876 (QQLVDKLGLK…LAKIAARCMA (198 aa)) constitute an ATP-grasp 2 domain. 10 residues coordinate ATP: Arg-715, Arg-754, Leu-756, Glu-761, Gly-787, Val-788, His-789, Ser-790, Gln-830, and Glu-847. The Mg(2+) site is built by Gln-830, Glu-847, and Asn-849. Residues Gln-830, Glu-847, and Asn-849 each contribute to the Mn(2+) site. The MGS-like domain occupies 943–1080 (IKAPPLGKAF…LQELHKELEA (138 aa)). The allosteric domain stretch occupies residues 943–1080 (IKAPPLGKAF…LQELHKELEA (138 aa)).

This sequence belongs to the CarB family. As to quaternary structure, composed of two chains; the small (or glutamine) chain promotes the hydrolysis of glutamine to ammonia, which is used by the large (or ammonia) chain to synthesize carbamoyl phosphate. Tetramer of heterodimers (alpha,beta)4. The cofactor is Mg(2+). Mn(2+) is required as a cofactor.

The catalysed reaction is hydrogencarbonate + L-glutamine + 2 ATP + H2O = carbamoyl phosphate + L-glutamate + 2 ADP + phosphate + 2 H(+). It carries out the reaction hydrogencarbonate + NH4(+) + 2 ATP = carbamoyl phosphate + 2 ADP + phosphate + 2 H(+). It functions in the pathway amino-acid biosynthesis; L-arginine biosynthesis; carbamoyl phosphate from bicarbonate: step 1/1. It participates in pyrimidine metabolism; UMP biosynthesis via de novo pathway; (S)-dihydroorotate from bicarbonate: step 1/3. Its function is as follows. Large subunit of the glutamine-dependent carbamoyl phosphate synthetase (CPSase). CPSase catalyzes the formation of carbamoyl phosphate from the ammonia moiety of glutamine, carbonate, and phosphate donated by ATP, constituting the first step of 2 biosynthetic pathways, one leading to arginine and/or urea and the other to pyrimidine nucleotides. The large subunit (synthetase) binds the substrates ammonia (free or transferred from glutamine from the small subunit), hydrogencarbonate and ATP and carries out an ATP-coupled ligase reaction, activating hydrogencarbonate by forming carboxy phosphate which reacts with ammonia to form carbamoyl phosphate. The polypeptide is Carbamoyl phosphate synthase large chain (Xanthomonas campestris pv. campestris (strain ATCC 33913 / DSM 3586 / NCPPB 528 / LMG 568 / P 25)).